We begin with the raw amino-acid sequence, 255 residues long: FMR1 neighbor protein (255 aa).

At 1 to 68 (MSSHRRKAKG…ESLKMRVSKP (68 aa)) the chain is on the cytoplasmic side. The helical transmembrane segment at 69–89 (FGMLMLSIWILLFVCYYLSYY) threads the bilayer. Residues 90-183 (LCSGSSYFVL…FAPFRDVPKQ (94 aa)) lie on the Extracellular side of the membrane. Residues 125-184 (LLNFFFPTTCNLRENQVAKPCNELQDLSESECLRHKCCFSSSGTTSFKCFAPFRDVPKQM) enclose the P-type domain. A helical membrane pass occupies residues 184–204 (MMQMFGLGAISLILVCLPIYC). Residues 205–255 (RSLFWRSEPADDLQRQDNRVVTGLKKQRRKRKRKSEMLQKAARGREEHGDE) lie on the Cytoplasmic side of the membrane. Residues 220–255 (QDNRVVTGLKKQRRKRKRKSEMLQKAARGREEHGDE) form a disordered region. Basic residues predominate over residues 229-238 (KKQRRKRKRK).

As to expression, testis-specific. Expressed in melanoma, sarcoma, lung, breast, bladder, esophageal and ovarian cancers.

The protein localises to the membrane. This is FMR1 neighbor protein from Homo sapiens (Human).